Reading from the N-terminus, the 213-residue chain is UPF0329 protein ECU04_0110 (213 aa).

It belongs to the UPF0329 family.

The chain is UPF0329 protein ECU04_0110 from Encephalitozoon cuniculi (strain GB-M1) (Microsporidian parasite).